Reading from the N-terminus, the 267-residue chain is 27 kDa core protein (267 aa).

It belongs to the chordopoxvirinae D3 family.

The protein resides in the virion. In terms of biological role, late protein which is part of a large complex required for early virion morphogenesis. This complex participates in the formation of virosomes and the incorporation of virosomal contents into nascent immature virions. The protein is 27 kDa core protein of Canarypox virus (CNPV).